The chain runs to 457 residues: Argininosuccinate lyase (457 aa).

The protein belongs to the lyase 1 family. Argininosuccinate lyase subfamily.

It localises to the cytoplasm. It catalyses the reaction 2-(N(omega)-L-arginino)succinate = fumarate + L-arginine. It functions in the pathway amino-acid biosynthesis; L-arginine biosynthesis; L-arginine from L-ornithine and carbamoyl phosphate: step 3/3. The polypeptide is Argininosuccinate lyase (Shewanella sediminis (strain HAW-EB3)).